Reading from the N-terminus, the 177-residue chain is Matrix protein (177 aa).

In terms of assembly, homomultimer. Interacts with nucleoprotein and with the cytoplasmic domain of glycoprotein.

Its subcellular location is the virion membrane. It is found in the host endomembrane system. In terms of biological role, plays a major role in assembly and budding of virion. Completely covers the ribonucleoprotein coil and keep it in condensed bullet-shaped form. Inhibits viral transcription and stimulates replication. The chain is Matrix protein (M) from Lettuce necrotic yellows virus (isolate 318) (LNYV).